The following is a 540-amino-acid chain: Phosphoenolpyruvate carboxykinase (ATP) (540 aa).

Residue R65 coordinates substrate. K87 is modified (N6-acetyllysine). 2 residues coordinate substrate: Y207 and K213. ATP contacts are provided by residues K213, H232, and 248 to 256 (GLSGTGKTT). Residues K213 and H232 each contribute to the Mn(2+) site. D269 contributes to the Mn(2+) binding site. ATP is bound by residues E297, R333, 449–450 (RI), and T455. R333 is a binding site for substrate. K523 carries the post-translational modification N6-acetyllysine.

This sequence belongs to the phosphoenolpyruvate carboxykinase (ATP) family. In terms of assembly, monomer. Requires Mn(2+) as cofactor.

Its subcellular location is the cytoplasm. The catalysed reaction is oxaloacetate + ATP = phosphoenolpyruvate + ADP + CO2. The protein operates within carbohydrate biosynthesis; gluconeogenesis. Its function is as follows. Involved in the gluconeogenesis. Catalyzes the conversion of oxaloacetate (OAA) to phosphoenolpyruvate (PEP) through direct phosphoryl transfer between the nucleoside triphosphate and OAA. The protein is Phosphoenolpyruvate carboxykinase (ATP) of Shigella flexneri.